A 227-amino-acid polypeptide reads, in one-letter code: Enolase-phosphatase E1 (227 aa).

Mg(2+) is bound by residues Asp-11 and Glu-13. Residues 118 to 119 (SS) and Lys-161 contribute to the substrate site. Asp-186 provides a ligand contact to Mg(2+).

The protein belongs to the HAD-like hydrolase superfamily. MasA/MtnC family. Monomer. Mg(2+) is required as a cofactor.

The protein resides in the cytoplasm. Its subcellular location is the nucleus. The enzyme catalyses 5-methylsulfanyl-2,3-dioxopentyl phosphate + H2O = 1,2-dihydroxy-5-(methylsulfanyl)pent-1-en-3-one + phosphate. The protein operates within amino-acid biosynthesis; L-methionine biosynthesis via salvage pathway; L-methionine from S-methyl-5-thio-alpha-D-ribose 1-phosphate: step 3/6. It participates in amino-acid biosynthesis; L-methionine biosynthesis via salvage pathway; L-methionine from S-methyl-5-thio-alpha-D-ribose 1-phosphate: step 4/6. Its function is as follows. Bifunctional enzyme that catalyzes the enolization of 2,3-diketo-5-methylthiopentyl-1-phosphate (DK-MTP-1-P) into the intermediate 2-hydroxy-3-keto-5-methylthiopentenyl-1-phosphate (HK-MTPenyl-1-P), which is then dephosphorylated to form the acireductone 1,2-dihydroxy-3-keto-5-methylthiopentene (DHK-MTPene). This Saccharomyces cerevisiae (strain YJM789) (Baker's yeast) protein is Enolase-phosphatase E1.